The following is a 390-amino-acid chain: O-glycoside alpha-1,2-mannosyltransferase omh1 (390 aa).

The active-site Nucleophile is glutamate 279.

This sequence belongs to the glycosyltransferase 15 family.

Its subcellular location is the endoplasmic reticulum. It localises to the golgi apparatus. In terms of biological role, mannosyltransferase involved in O-glycosylation of cell wall and secreted proteins. Plays a major role in extending alpha-1,2-linked mannose in the O-glycan pathway. The sequence is that of O-glycoside alpha-1,2-mannosyltransferase omh1 (omh1) from Schizosaccharomyces pombe (strain 972 / ATCC 24843) (Fission yeast).